The chain runs to 54 residues: UPF0391 membrane protein Rfer_1875 (54 aa).

The next 2 helical transmembrane spans lie at 5–25 (AVVF…GIAA) and 30–50 (IGKI…LFGL).

It belongs to the UPF0391 family.

It is found in the cell membrane. This chain is UPF0391 membrane protein Rfer_1875, found in Albidiferax ferrireducens (strain ATCC BAA-621 / DSM 15236 / T118) (Rhodoferax ferrireducens).